Consider the following 175-residue polypeptide: Large ribosomal subunit protein mL67 (175 aa).

It belongs to the mitochondrion-specific ribosomal protein mL67 family. As to quaternary structure, component of the mitochondrial large ribosomal subunit (mt-LSU). Mature yeast 74S mitochondrial ribosomes consist of a small (37S) and a large (54S) subunit. The 37S small subunit contains a 15S ribosomal RNA (15S mt-rRNA) and at least 32 different proteins. The 54S large subunit contains a 21S rRNA (21S mt-rRNA) and at least 45 different proteins.

The protein resides in the mitochondrion. Functionally, component of the mitochondrial ribosome (mitoribosome), a dedicated translation machinery responsible for the synthesis of mitochondrial genome-encoded proteins, including at least some of the essential transmembrane subunits of the mitochondrial respiratory chain. The mitoribosomes are attached to the mitochondrial inner membrane and translation products are cotranslationally integrated into the membrane. mL67/mhr1 also has extraribosomal functions, being involved in regulation of mitochondrial DNA recombination, maintenance and repair, and generation of homoplasmic cells. mL67/mhr1 also acts as transcription factor involved in regulation of RNA polymerase II-dependent transcription. This chain is Large ribosomal subunit protein mL67 (mhr1), found in Schizosaccharomyces pombe (strain 972 / ATCC 24843) (Fission yeast).